The following is a 336-amino-acid chain: Ferrochelatase (336 aa).

Positions 206 and 287 each coordinate Fe cation.

Belongs to the ferrochelatase family.

The protein localises to the cytoplasm. It catalyses the reaction heme b + 2 H(+) = protoporphyrin IX + Fe(2+). It participates in porphyrin-containing compound metabolism; protoheme biosynthesis; protoheme from protoporphyrin-IX: step 1/1. Functionally, catalyzes the ferrous insertion into protoporphyrin IX. This Neisseria meningitidis serogroup A / serotype 4A (strain DSM 15465 / Z2491) protein is Ferrochelatase.